A 423-amino-acid polypeptide reads, in one-letter code: 58 kDa phosphoprotein (423 aa).

Over residues 46 to 60 (KMGYEKMKSEDSTEE) the composition is skewed to basic and acidic residues. Residues 46-82 (KMGYEKMKSEDSTEEKSDEEEEDEEEEEEEEEDDDPE) are disordered. A compositionally biased stretch (acidic residues) spans 61-82 (KSDEEEEDEEEEEEEEEDDDPE). TPR repeat units lie at residues 113–146 (ICKL…GNPS), 147–180 (AMIY…NVDS), and 181–214 (ANAY…DYDE). Positions 260–301 (KKKAEKMYKENNKRENYDSDSSDSSYSEPDFSGDFPGGMPGG) are disordered. Residues 264–276 (EKMYKENNKRENY) are compositionally biased toward basic and acidic residues. The tract at residues 292-362 (GDFPGGMPGG…GMPGMPGGMP (71 aa)) is 19 X 3-4 AA approximate repeats. One can recognise an STI1 domain in the interval 361 to 423 (MPDLNSPEMK…GGMMGEKPKP (63 aa)).

Its subcellular location is the cytoplasm. Functionally, may play a role in protein folding or protein-protein interactions. May act as a co-chaperone. This chain is 58 kDa phosphoprotein, found in Plasmodium berghei.